Here is a 64-residue protein sequence, read N- to C-terminus: Alpha-mammal toxin BmK-M8 (64 aa).

The LCN-type CS-alpha/beta domain occupies 2–64; the sequence is RDAYIADSEN…ERIKEPGKCG (63 aa). Disulfide bonds link Cys12–Cys63, Cys16–Cys36, Cys22–Cys46, and Cys26–Cys48.

The protein belongs to the long (4 C-C) scorpion toxin superfamily. Sodium channel inhibitor family. Alpha subfamily. In terms of tissue distribution, expressed by the venom gland.

Its subcellular location is the secreted. In terms of biological role, alpha toxins bind voltage-independently at site-3 of sodium channels (Nav) and inhibit the inactivation of the activated channels, thereby blocking neuronal transmission. This acidic toxin has a weak toxicity and is active against mammals. This is Alpha-mammal toxin BmK-M8 from Olivierus martensii (Manchurian scorpion).